Consider the following 242-residue polypeptide: MNSRKDKNSKGKNSDTKRKKSSQENDKAVVLLSGGLDSTTCLYQALADGKKIQALSFDYGQKHKIELSYAKKITRQLGISHTIQKLKPELFLGSSLTQKSLRVPKNSLGKEEIPNTYVPGRNILFLSFAVCLAEGTGSNSIYIGVNAMDYSGYPDCRPEFIKTYETAIQLGTKKGNQGSPIKIVTPLQNLSKKEIVLLGNRLQVPFHLTFSCYDPKNRKACGKCDACLLRKKGFQETGVSEK.

Residues 1–25 (MNSRKDKNSKGKNSDTKRKKSSQEN) are disordered. 32–42 (LSGGLDSTTCL) is a binding site for ATP. Residues cysteine 212, cysteine 221, cysteine 224, and cysteine 227 each coordinate Zn(2+).

Belongs to the QueC family. Requires Zn(2+) as cofactor.

It catalyses the reaction 7-carboxy-7-deazaguanine + NH4(+) + ATP = 7-cyano-7-deazaguanine + ADP + phosphate + H2O + H(+). The protein operates within purine metabolism; 7-cyano-7-deazaguanine biosynthesis. Functionally, catalyzes the ATP-dependent conversion of 7-carboxy-7-deazaguanine (CDG) to 7-cyano-7-deazaguanine (preQ(0)). The chain is 7-cyano-7-deazaguanine synthase from Leptospira borgpetersenii serovar Hardjo-bovis (strain JB197).